Consider the following 530-residue polypeptide: Ubiquitin carboxyl-terminal hydrolase 17-like protein 12 (530 aa).

The 296-residue stretch at 80 to 375 (AGLQNMGNTC…QAYVLFYIQK (296 aa)) folds into the USP domain. Catalysis depends on Cys-89, which acts as the Nucleophile. The active-site Proton acceptor is His-334. 2 stretches are compositionally biased toward basic and acidic residues: residues 382–392 (SESVSRGREPR) and 398–412 (DTDR…KRDH). 2 disordered regions span residues 382 to 412 (SESV…KRDH) and 477 to 530 (NHHP…LVCQ). Over residues 484 to 495 (SSLLKLSSTTPT) the composition is skewed to low complexity. The segment covering 496-505 (HQESMNTGTL) has biased composition (polar residues). A compositionally biased stretch (basic residues) spans 510–524 (GRARRSKGKNKHSKR).

Belongs to the peptidase C19 family. USP17 subfamily.

The protein localises to the nucleus. Its subcellular location is the endoplasmic reticulum. The catalysed reaction is Thiol-dependent hydrolysis of ester, thioester, amide, peptide and isopeptide bonds formed by the C-terminal Gly of ubiquitin (a 76-residue protein attached to proteins as an intracellular targeting signal).. In terms of biological role, deubiquitinating enzyme that removes conjugated ubiquitin from specific proteins to regulate different cellular processes that may include cell proliferation, progression through the cell cycle, apoptosis, cell migration, and the cellular response to viral infection. The polypeptide is Ubiquitin carboxyl-terminal hydrolase 17-like protein 12 (USP17L12) (Homo sapiens (Human)).